Reading from the N-terminus, the 353-residue chain is UPF0283 membrane protein YcjF (353 aa).

Over residues 1–19 (MSEPLKPRIDFAEPLKEEP) the composition is skewed to basic and acidic residues. A disordered region spans residues 1 to 35 (MSEPLKPRIDFAEPLKEEPTSAFKAQQTFSEAESR). 3 helical membrane passes run 70 to 90 (MVMG…VQWT), 100 to 120 (VALG…GSVV), and 213 to 233 (ESTL…FIAW).

The protein belongs to the UPF0283 family.

It is found in the cell inner membrane. The sequence is that of UPF0283 membrane protein YcjF from Salmonella enteritidis PT4 (strain P125109).